A 256-amino-acid polypeptide reads, in one-letter code: Imidazole glycerol phosphate synthase subunit HisF (256 aa).

Active-site residues include D12 and D131.

It belongs to the HisA/HisF family. Heterodimer of HisH and HisF.

It localises to the cytoplasm. The enzyme catalyses 5-[(5-phospho-1-deoxy-D-ribulos-1-ylimino)methylamino]-1-(5-phospho-beta-D-ribosyl)imidazole-4-carboxamide + L-glutamine = D-erythro-1-(imidazol-4-yl)glycerol 3-phosphate + 5-amino-1-(5-phospho-beta-D-ribosyl)imidazole-4-carboxamide + L-glutamate + H(+). It participates in amino-acid biosynthesis; L-histidine biosynthesis; L-histidine from 5-phospho-alpha-D-ribose 1-diphosphate: step 5/9. IGPS catalyzes the conversion of PRFAR and glutamine to IGP, AICAR and glutamate. The HisF subunit catalyzes the cyclization activity that produces IGP and AICAR from PRFAR using the ammonia provided by the HisH subunit. The protein is Imidazole glycerol phosphate synthase subunit HisF of Renibacterium salmoninarum (strain ATCC 33209 / DSM 20767 / JCM 11484 / NBRC 15589 / NCIMB 2235).